Consider the following 139-residue polypeptide: D-ribose pyranase (139 aa).

Histidine 20 serves as the catalytic Proton donor. Residues aspartate 28, histidine 106, and 128-130 (YAN) each bind substrate.

This sequence belongs to the RbsD / FucU family. RbsD subfamily. In terms of assembly, homodecamer.

The protein localises to the cytoplasm. The catalysed reaction is beta-D-ribopyranose = beta-D-ribofuranose. It functions in the pathway carbohydrate metabolism; D-ribose degradation; D-ribose 5-phosphate from beta-D-ribopyranose: step 1/2. Catalyzes the interconversion of beta-pyran and beta-furan forms of D-ribose. The sequence is that of D-ribose pyranase from Pasteurella multocida (strain Pm70).